A 229-amino-acid polypeptide reads, in one-letter code: NAD-dependent protein deacetylase (229 aa).

The Deacetylase sirtuin-type domain maps to 1-229 (MNKLNEALKK…SDAVKVFEEI (229 aa)). Alanine 20, arginine 32, glutamine 96, isoleucine 98, aspartate 99, histidine 114, threonine 181, serine 182, asparagine 205, and valine 223 together coordinate NAD(+). Nicotinamide-binding residues include isoleucine 98 and aspartate 99. Catalysis depends on histidine 114, which acts as the Proton acceptor.

Belongs to the sirtuin family. Class U subfamily.

The protein resides in the cytoplasm. The enzyme catalyses N(6)-acetyl-L-lysyl-[protein] + NAD(+) + H2O = 2''-O-acetyl-ADP-D-ribose + nicotinamide + L-lysyl-[protein]. Functionally, NAD-dependent protein deacetylase which modulates the activities of several enzymes which are inactive in their acetylated form. The polypeptide is NAD-dependent protein deacetylase (Listeria monocytogenes serovar 1/2a (strain ATCC BAA-679 / EGD-e)).